We begin with the raw amino-acid sequence, 1507 residues long: ABC multidrug transporter SNQ2 (1507 aa).

The disordered stretch occupies residues 1 to 73; sequence MSSSSEISVA…RSSTAELSPE (73 aa). The span at 41–55 shows a compositional bias: basic and acidic residues; it reads RSHEDADGDDAHSDN. N-linked (GlcNAc...) asparagine glycosylation is found at Asn55 and Asn336. The ABC transporter 1 domain maps to 157–412; that stretch reads CLPYTIYKAI…FYRMGYECPP (256 aa). 3 consecutive transmembrane segments (helical) span residues 522–542, 556–576, and 605–625; these read AYTVITICSAIIQSLVSGSLY, GGVLYFCLLYYSLMGLANLSF, and FPFRMIGMTCFLIIIYFLSGL. N-linked (GlcNAc...) asparagine glycosylation is present at Asn626. A helical transmembrane segment spans residues 635-655; that stretch reads VYLFLTMCSESINALFELIAA. The N-linked (GlcNAc...) asparagine glycan is linked to Asn659. Transmembrane regions (helical) follow at residues 665–685 and 773–793; these read SISGIVMMSISLYSTYMIQLP and FGIMWCFLLGYIALKALITEI. The region spanning 857 to 1099 is the ABC transporter 2 domain; it reads FIWRNVCYTI…LLSYFERNGA (243 aa). An N-linked (GlcNAc...) asparagine glycan is attached at Asn878. 893 to 900 serves as a coordination point for ATP; it reads GESGAGKT. The next 3 membrane-spanning stretches (helical) occupy residues 1193–1213, 1220–1240, and 1270–1290; these read YIMSKMMLMTVGGLYIGFTFY, TGLQNTLFAAFISIILSAPAM, and LITQYLSEIPYHFLFSAIFFV. A glycan (N-linked (GlcNAc...) asparagine) is linked at Asn1311. Transmembrane regions (helical) follow at residues 1314–1334 and 1339–1359; these read IMFQLYYIGFGLCVLYMAPNL and VILGLCLSFLIAFCGVVQPVS. Asn1428 carries N-linked (GlcNAc...) asparagine glycosylation. A helical transmembrane segment spans residues 1459–1479; it reads FGLYWAYIGFNICAMVAIYYI.

The protein belongs to the ABC transporter superfamily. ABCG family. PDR (TC 3.A.1.205) subfamily.

It is found in the cell membrane. ABC multidrug transporter involved in the response to azoles such as fluconazole, itraconazole, ketoconazole and voriconazole and contributes to the development of PDR1-dependent azole resistance. Plays a role in biofilm tolerance to fluconazole. Also confers resistance to 4-nitroquinoline-N-oxide (4-NQO). This is ABC multidrug transporter SNQ2 from Candida glabrata (strain ATCC 2001 / BCRC 20586 / JCM 3761 / NBRC 0622 / NRRL Y-65 / CBS 138) (Yeast).